The primary structure comprises 291 residues: Lys-63-specific deubiquitinase BRCC36 (291 aa).

Position 2 is an N-acetylalanine (alanine 2). The MPN domain maps to 12 to 179 (VHLESDAFLV…YTCFQSVQAQ (168 aa)). Residues histidine 122, histidine 124, and aspartate 135 each contribute to the Zn(2+) site. Positions 122 to 135 (HSHPHITVWPSHVD) match the JAMM motif motif. Serine 233 is subject to Phosphoserine.

It belongs to the peptidase M67A family. BRCC36 subfamily. As to quaternary structure, component of the ARISC complex, at least composed of UIMC1/RAP80, ABRAXAS1, BRCC3/BRCC36, BABAM2 and BABAM1/NBA1. Component of the BRCA1-A complex, at least composed of BRCA1, BARD1, UIMC1/RAP80, ABRAXAS1, BRCC3/BRCC36, BABAM2 and BABAM1/NBA1. In the BRCA1-A complex, interacts directly with ABRAXAS1 and BABAM2. Component of the BRISC complex, at least composed of ABRAXAS2, BRCC3/BRCC36, BABAM2 and BABAM1/NBA1. Identified in a complex with SHMT2 and the other subunits of the BRISC complex. In the BRISC complex, interacts directly with ABRAXAS2. Identified in a complex with ABRAXAS2 and NUMA1. The BRISC complex interacts with the CSN complex. Component of the BRCA1/BRCA2 containing complex (BRCC), which also contains BRCA1, BRCA2, BARD1, BABAM2 and RAD51. BRCC is a ubiquitin E3 ligase complex that enhances cellular survival following DNA damage. Interacts with BRCA1. Binds polyubiquitin. Interacts with PWWP2B. Interacts with HDAC1; this interaction is enhanced in the presence of PWWP2B. Zn(2+) serves as cofactor.

It is found in the nucleus. Its subcellular location is the cytoplasm. The protein localises to the cytoskeleton. It localises to the spindle pole. Metalloprotease that specifically cleaves 'Lys-63'-linked polyubiquitin chains. Does not have activity toward 'Lys-48'-linked polyubiquitin chains. Component of the BRCA1-A complex, a complex that specifically recognizes 'Lys-63'-linked ubiquitinated histones H2A and H2AX at DNA lesions sites, leading to target the BRCA1-BARD1 heterodimer to sites of DNA damage at double-strand breaks (DSBs). In the BRCA1-A complex, it specifically removes 'Lys-63'-linked ubiquitin on histones H2A and H2AX, antagonizing the RNF8-dependent ubiquitination at double-strand breaks (DSBs). Catalytic subunit of the BRISC complex, a multiprotein complex that specifically cleaves 'Lys-63'-linked ubiquitin in various substrates. Mediates the specific 'Lys-63'-specific deubiquitination associated with the COP9 signalosome complex (CSN), via the interaction of the BRISC complex with the CSN complex. The BRISC complex is required for normal mitotic spindle assembly and microtubule attachment to kinetochores via its role in deubiquitinating NUMA1. Plays a role in interferon signaling via its role in the deubiquitination of the interferon receptor IFNAR1; deubiquitination increases IFNAR1 activity by enhancing its stability and cell surface expression. Acts as a regulator of the NLRP3 inflammasome by mediating deubiquitination of NLRP3, leading to NLRP3 inflammasome assembly. Down-regulates the response to bacterial lipopolysaccharide (LPS) via its role in IFNAR1 deubiquitination. Deubiquitinates HDAC1 and PWWP2B leading to their stabilization. The chain is Lys-63-specific deubiquitinase BRCC36 (Brcc3) from Rattus norvegicus (Rat).